Reading from the N-terminus, the 45-residue chain is C-phycocyanin beta subunit (45 aa).

Belongs to the phycobiliprotein family. As to quaternary structure, heterodimer of an alpha and a beta subunit. The hererodimer further assembles into trimers and the trimers into hexamers. Contains two covalently linked bilin chromophores.

Its subcellular location is the cellular thylakoid membrane. Functionally, light-harvesting photosynthetic bile pigment-protein from the phycobiliprotein complex (phycobilisome, PBS). Phycocyanin is the major phycobiliprotein in the PBS rod. The sequence is that of C-phycocyanin beta subunit (cpcB) from Limnospira fusiformis (Arthrospira fusiformis).